The chain runs to 565 residues: DNA primase (565 aa).

The segment at cysteine 37–cysteine 61 adopts a CHC2-type zinc-finger fold. One can recognise a Toprim domain in the interval glycine 248–tyrosine 329. Residues glutamate 254, aspartate 298, and aspartate 300 each coordinate Mg(2+).

Belongs to the DnaG primase family. In terms of assembly, monomer. Interacts with DnaB. Requires Zn(2+) as cofactor. Mg(2+) is required as a cofactor.

The catalysed reaction is ssDNA + n NTP = ssDNA/pppN(pN)n-1 hybrid + (n-1) diphosphate.. Functionally, RNA polymerase that catalyzes the synthesis of short RNA molecules used as primers for DNA polymerase during DNA replication. The polypeptide is DNA primase (Thermotoga maritima (strain ATCC 43589 / DSM 3109 / JCM 10099 / NBRC 100826 / MSB8)).